The primary structure comprises 338 residues: Ketol-acid reductoisomerase (NADP(+)) (338 aa).

The region spanning 1 to 181 is the KARI N-terminal Rossmann domain; sequence MKVFYDNDAD…GGTRAGVIET (181 aa). NADP(+) is bound by residues 24–27, R47, S50, S52, and 82–85; these read YGSQ and DEGQ. The active site involves H107. Residue G133 participates in NADP(+) binding. The KARI C-terminal knotted domain occupies 182–327; the sequence is SFREETETDL…SKLRSMMTWI (146 aa). The Mg(2+) site is built by D190, E194, E226, and E230. Residue S251 participates in substrate binding.

It belongs to the ketol-acid reductoisomerase family. It depends on Mg(2+) as a cofactor.

The catalysed reaction is (2R)-2,3-dihydroxy-3-methylbutanoate + NADP(+) = (2S)-2-acetolactate + NADPH + H(+). It catalyses the reaction (2R,3R)-2,3-dihydroxy-3-methylpentanoate + NADP(+) = (S)-2-ethyl-2-hydroxy-3-oxobutanoate + NADPH + H(+). It participates in amino-acid biosynthesis; L-isoleucine biosynthesis; L-isoleucine from 2-oxobutanoate: step 2/4. The protein operates within amino-acid biosynthesis; L-valine biosynthesis; L-valine from pyruvate: step 2/4. Functionally, involved in the biosynthesis of branched-chain amino acids (BCAA). Catalyzes an alkyl-migration followed by a ketol-acid reduction of (S)-2-acetolactate (S2AL) to yield (R)-2,3-dihydroxy-isovalerate. In the isomerase reaction, S2AL is rearranged via a Mg-dependent methyl migration to produce 3-hydroxy-3-methyl-2-ketobutyrate (HMKB). In the reductase reaction, this 2-ketoacid undergoes a metal-dependent reduction by NADPH to yield (R)-2,3-dihydroxy-isovalerate. The polypeptide is Ketol-acid reductoisomerase (NADP(+)) (Acidithiobacillus ferrooxidans (strain ATCC 23270 / DSM 14882 / CIP 104768 / NCIMB 8455) (Ferrobacillus ferrooxidans (strain ATCC 23270))).